Consider the following 154-residue polypeptide: Large ribosomal subunit protein uL30 (154 aa).

This sequence belongs to the universal ribosomal protein uL30 family. Part of the 50S ribosomal subunit.

In Methanococcus maripaludis (strain DSM 14266 / JCM 13030 / NBRC 101832 / S2 / LL), this protein is Large ribosomal subunit protein uL30.